We begin with the raw amino-acid sequence, 457 residues long: Dihydrolipoyl dehydrogenase (457 aa).

FAD is bound by residues 32-40 (EKQYFGGVC), Lys49, and Ala113. Residues Cys40 and Cys45 are joined by a disulfide bond. NAD(+) contacts are provided by residues 178–182 (GGGVI), Val235, and 262–265 (SIGR). Positions 303 and 311 each coordinate FAD. His437 acts as the Proton acceptor in catalysis.

The protein belongs to the class-I pyridine nucleotide-disulfide oxidoreductase family. In terms of assembly, homodimer. FAD serves as cofactor.

It localises to the cytoplasm. It carries out the reaction N(6)-[(R)-dihydrolipoyl]-L-lysyl-[protein] + NAD(+) = N(6)-[(R)-lipoyl]-L-lysyl-[protein] + NADH + H(+). Functionally, lipoamide dehydrogenase is a component of the alpha-ketoacid dehydrogenase complexes. The sequence is that of Dihydrolipoyl dehydrogenase (pdhD) from Mycoplasma genitalium (strain ATCC 33530 / DSM 19775 / NCTC 10195 / G37) (Mycoplasmoides genitalium).